Reading from the N-terminus, the 296-residue chain is GTPase Era (296 aa).

Residues 7 to 174 (RTGFVAVVGR…LDEIAARLPE (168 aa)) enclose the Era-type G domain. Residues 15 to 22 (GRPNVGKS) are G1. 15-22 (GRPNVGKS) is a binding site for GTP. The G2 stretch occupies residues 41–45 (QTTRH). The segment at 62–65 (DTPG) is G3. GTP-binding positions include 62–66 (DTPGF) and 123–126 (SKID). Residues 123 to 126 (SKID) form a G4 region. The interval 153-155 (VSA) is G5. One can recognise a KH type-2 domain in the interval 205-281 (VGDELPYGCT…HLEVYIKVRK (77 aa)).

The protein belongs to the TRAFAC class TrmE-Era-EngA-EngB-Septin-like GTPase superfamily. Era GTPase family. As to quaternary structure, monomer.

Its subcellular location is the cytoplasm. The protein resides in the cell inner membrane. An essential GTPase that binds both GDP and GTP, with rapid nucleotide exchange. Plays a role in 16S rRNA processing and 30S ribosomal subunit biogenesis and possibly also in cell cycle regulation and energy metabolism. This Bordetella petrii (strain ATCC BAA-461 / DSM 12804 / CCUG 43448) protein is GTPase Era.